The sequence spans 283 residues: 1D-myo-inositol 2-acetamido-2-deoxy-alpha-D-glucopyranoside deacetylase (283 aa).

The Zn(2+) site is built by histidine 7, aspartate 10, and histidine 148.

The protein belongs to the MshB deacetylase family. Zn(2+) is required as a cofactor.

The catalysed reaction is 1D-myo-inositol 2-acetamido-2-deoxy-alpha-D-glucopyranoside + H2O = 1D-myo-inositol 2-amino-2-deoxy-alpha-D-glucopyranoside + acetate. Functionally, catalyzes the deacetylation of 1D-myo-inositol 2-acetamido-2-deoxy-alpha-D-glucopyranoside (GlcNAc-Ins) in the mycothiol biosynthesis pathway. The chain is 1D-myo-inositol 2-acetamido-2-deoxy-alpha-D-glucopyranoside deacetylase from Gordonia bronchialis (strain ATCC 25592 / DSM 43247 / BCRC 13721 / JCM 3198 / KCTC 3076 / NBRC 16047 / NCTC 10667) (Rhodococcus bronchialis).